Consider the following 477-residue polypeptide: Maternal protein exuperantia-2 (477 aa).

Over residues 196 to 209 the composition is skewed to basic and acidic residues; sequence KDGNSTKEDEHENP. Disordered regions lie at residues 196-226 and 384-477; these read KDGN…NQKQ and TIKP…FADI. Residues 385–402 show a composition bias toward basic residues; it reads IKPRCKRSGNGTRRRNRA.

Functionally, ensures the proper localization of the mRNA of the bicoid gene to the anterior regions of the oocyte thus playing a fundamental role in the establishment of the polarity of the oocyte. May bind the bcd mRNA. This is Maternal protein exuperantia-2 (exu2) from Drosophila pseudoobscura pseudoobscura (Fruit fly).